The chain runs to 248 residues: Probable transcriptional regulatory protein Dde_2325 (248 aa).

Over residues 1-15 (MAGHSKWKNIQHRKG) the composition is skewed to basic residues. Residues 1 to 22 (MAGHSKWKNIQHRKGRQDAKKS) are disordered.

This sequence belongs to the TACO1 family.

It is found in the cytoplasm. This is Probable transcriptional regulatory protein Dde_2325 from Oleidesulfovibrio alaskensis (strain ATCC BAA-1058 / DSM 17464 / G20) (Desulfovibrio alaskensis).